A 502-amino-acid polypeptide reads, in one-letter code: UTP--glucose-1-phosphate uridylyltransferase 2 (502 aa).

Residues 1–20 (MMKPDLNSPLPQSPQLQAFG) form a disordered region. The span at 9–20 (PLPQSPQLQAFG) shows a compositional bias: polar residues. Residues 114–117 (LNGG), lysine 128, glutamine 191, and glycine 220 each bind UTP. Residue 116–117 (GG) coordinates substrate. Residues histidine 221 and 249–251 (NVD) each bind substrate. Residues aspartate 251 and lysine 390 each coordinate UTP.

It belongs to the UDPGP type 1 family.

The enzyme catalyses alpha-D-glucose 1-phosphate + UTP + H(+) = UDP-alpha-D-glucose + diphosphate. Plays a central role as a glucosyl donor in cellular metabolic pathways. The sequence is that of UTP--glucose-1-phosphate uridylyltransferase 2 (ugpB) from Dictyostelium discoideum (Social amoeba).